The chain runs to 585 residues: Bifunctional purine biosynthesis protein ade10 (585 aa).

Residues 1–142 enclose the MGS-like domain; sequence MYALLSVYDK…KNHARVTILS (142 aa). IMP-binding positions include 30–33, 60–63, 97–98, and 121–122; these read SGGT, RVKT, CN, and DI. The active-site Proton donor/acceptor; for FAICAR cyclization activity is Lys133. Residues 200 to 201, His260, Gly308, Asp331, Asn423, and Arg443 contribute to the 5-amino-1-(5-phospho-beta-D-ribosyl)imidazole-4-carboxamide site; that span reads RY. His260 acts as the Proton acceptor; for AICAR formyltransferase activity in catalysis. Ile444 contributes to the (6R)-10-formyltetrahydrofolate binding site. Position 534 (Phe534) interacts with 5-amino-1-(5-phospho-beta-D-ribosyl)imidazole-4-carboxamide. Residues Asp539 and 558 to 559 each bind (6R)-10-formyltetrahydrofolate; that span reads SV. Arg581 provides a ligand contact to 5-amino-1-(5-phospho-beta-D-ribosyl)imidazole-4-carboxamide.

It belongs to the PurH family. Homodimer.

It is found in the cytoplasm. It localises to the cytosol. The catalysed reaction is (6R)-10-formyltetrahydrofolate + 5-amino-1-(5-phospho-beta-D-ribosyl)imidazole-4-carboxamide = 5-formamido-1-(5-phospho-D-ribosyl)imidazole-4-carboxamide + (6S)-5,6,7,8-tetrahydrofolate. It carries out the reaction IMP + H2O = 5-formamido-1-(5-phospho-D-ribosyl)imidazole-4-carboxamide. It functions in the pathway purine metabolism; IMP biosynthesis via de novo pathway; 5-formamido-1-(5-phospho-D-ribosyl)imidazole-4-carboxamide from 5-amino-1-(5-phospho-D-ribosyl)imidazole-4-carboxamide (10-formyl THF route): step 1/1. It participates in purine metabolism; IMP biosynthesis via de novo pathway; IMP from 5-formamido-1-(5-phospho-D-ribosyl)imidazole-4-carboxamide: step 1/1. Functionally, bifunctional enzyme that catalyzes the last two steps of purine biosynthesis. Acts as a transformylase that incorporates a formyl group to the AMP analog AICAR (5-amino-1-(5-phospho-beta-D-ribosyl)imidazole-4-carboxamide) to produce the intermediate formyl-AICAR (FAICAR). Also catalyzes the cyclization of FAICAR to IMP. The sequence is that of Bifunctional purine biosynthesis protein ade10 (ade10) from Schizosaccharomyces pombe (strain 972 / ATCC 24843) (Fission yeast).